The following is a 158-amino-acid chain: Secreted RxLR effector protein 2 (158 aa).

Residues Met-1–Ala-21 form the signal peptide. The short motif at Arg-54 to Arg-75 is the RxLR-dEER element.

This sequence belongs to the RxLR effector family.

It localises to the secreted. The protein resides in the host cell. Its function is as follows. Secreted effector that completely suppresses elicitor-induced cell death in host and enhances virulence of P.parasitica. The sequence is that of Secreted RxLR effector protein 2 from Phytophthora nicotianae (Potato buckeye rot agent).